The sequence spans 231 residues: Sensory transduction protein BceR (231 aa).

Residues 3–116 (KLLLIEDDES…VLIAKIQAMF (114 aa)) enclose the Response regulatory domain. Residue aspartate 52 is modified to 4-aspartylphosphate. The ompR/PhoB-type DNA-binding region spans 127 to 225 (STIKTWCGAA…KVGQGYIAKE (99 aa)).

Phosphorylated by BceS.

It is found in the cytoplasm. Its function is as follows. Member of the two-component regulatory system BceS/BceR involved in the regulation of bacitracin resistance. When activated by BceS, binds to the upstream region of the bceAB promoter and up-regulates the expression of these two genes. The chain is Sensory transduction protein BceR (bceR) from Bacillus subtilis (strain 168).